The sequence spans 273 residues: Hydroxyethylthiazole kinase 2 (273 aa).

Met45 provides a ligand contact to substrate. Lys120 and Thr173 together coordinate ATP. Residue Gly200 coordinates substrate.

The protein belongs to the Thz kinase family. Mg(2+) is required as a cofactor.

The catalysed reaction is 5-(2-hydroxyethyl)-4-methylthiazole + ATP = 4-methyl-5-(2-phosphooxyethyl)-thiazole + ADP + H(+). Its pathway is cofactor biosynthesis; thiamine diphosphate biosynthesis; 4-methyl-5-(2-phosphoethyl)-thiazole from 5-(2-hydroxyethyl)-4-methylthiazole: step 1/1. In terms of biological role, catalyzes the phosphorylation of the hydroxyl group of 4-methyl-5-beta-hydroxyethylthiazole (THZ). In Leuconostoc mesenteroides subsp. mesenteroides (strain ATCC 8293 / DSM 20343 / BCRC 11652 / CCM 1803 / JCM 6124 / NCDO 523 / NBRC 100496 / NCIMB 8023 / NCTC 12954 / NRRL B-1118 / 37Y), this protein is Hydroxyethylthiazole kinase 2.